A 277-amino-acid chain; its full sequence is MASAGGEDCESPAPEADRPHQRPFLIGVSGGTASGKSTVCEKIMELLGQNEVEQRQRKVVILSQDRFYKVLTAEQKAKALKGQYNFDHPDAFDNDLMHRTLKNIVEGKTVEVPTYDFVTHSRLPETTVVYPADVVLFEGILVFYSQEIRDMFHLRLFVDTDSDVRLSRRVLRDVRRGRDLEQILTQYTTFVKPAFEEFCLPTKKYADVIIPRGVDNMVAINLIVQHIQDILNGDICKWHRGGSNGRSYKRTFSEPGDHPGMLTSGKRSHLESSSRPH.

Residues 1–30 (MASAGGEDCESPAPEADRPHQRPFLIGVSG) are disordered. Residue 30–38 (GGTASGKST) coordinates ATP. Asp-65 is an active-site residue. Residues Asp-87, Tyr-115, His-120, Arg-169, Arg-178, and Gln-186 each contribute to the substrate site. Asp-215 contributes to the ATP binding site. Residues 247–277 (SYKRTFSEPGDHPGMLTSGKRSHLESSSRPH) form a disordered region. At Thr-251 the chain carries Phosphothreonine. Ser-253 is modified (phosphoserine). Basic and acidic residues predominate over residues 268-277 (SHLESSSRPH).

The protein belongs to the uridine kinase family. Ubiquitous.

The enzyme catalyses uridine + ATP = UMP + ADP + H(+). It catalyses the reaction cytidine + ATP = CMP + ADP + H(+). It participates in pyrimidine metabolism; CTP biosynthesis via salvage pathway; CTP from cytidine: step 1/3. The protein operates within pyrimidine metabolism; UMP biosynthesis via salvage pathway; UMP from uridine: step 1/1. In terms of biological role, phosphorylates uridine and cytidine to uridine monophosphate and cytidine monophosphate. Does not phosphorylate deoxyribonucleosides or purine ribonucleosides. Can use ATP or GTP as a phosphate donor. Can also phosphorylate cytidine and uridine nucleoside analogs such as 6-azauridine, 5-fluorouridine, 4-thiouridine, 5-bromouridine, N(4)-acetylcytidine, N(4)-benzoylcytidine, 5-fluorocytidine, 2-thiocytidine, 5-methylcytidine, and N(4)-anisoylcytidine. The sequence is that of Uridine-cytidine kinase 1 (UCK1) from Homo sapiens (Human).